A 432-amino-acid polypeptide reads, in one-letter code: MCACMTKEALLEVCKQNGLYRTASLNDKLYCNFKGFSQIACLEDYVNLKALFLEGNVLETLEGLPPLADLKCLYVQQNCIWKISGLEAVPGLDTLNISNNQLTKLEGLACCPALRTLIATHNHLVTLDSVAHLAECKALQTLDLQNNELEDPGIVDILKQIPDLRCLYLKGNPVVSNIKNYRKVLVTSIPSLTYLDDRPVFDNERKIAQAWLEGGLEGERAMRNQLKEEEEERSRKNHEFMMQMRAAGWRERRKRMGLPDGDTDPALDDMSDGEYEFDEEPEELVEARQRLAAYTARPGEEEPAELASARQGLARDGKPIQEGAWGSGAAAESDSAIYLQSVKAAQAELDVVRQQQPRQLPTAQVLIEELDEPCGGKAPAADEGSTPPALSPMTSPSGSEGQGGEGVAAAKKGAASGAAEGISAAVDINDLD.

LRR repeat units follow at residues asparagine 47–alanine 68, aspartate 69–proline 90, glycine 91–proline 112, alanine 113–alanine 134, and alanine 138–lysine 159. In terms of domain architecture, LRRCT spans proline 173–tryptophan 211. A coiled-coil region spans residues leucine 212–glutamine 243. Disordered regions lie at residues arginine 297 to glutamate 332 and glutamate 368 to aspartate 432. Low complexity-rich tracts occupy residues glycine 323 to glutamate 332 and valine 407 to alanine 425.

This sequence belongs to the DNAAF1 family. Interacts with both outer row and I1 inner row dyneins.

It is found in the cytoplasm. The protein resides in the cytoskeleton. It localises to the cilium axoneme. In terms of biological role, cilium-specific protein required for cilia structures. Axonemal dynein-associated protein that participates in a structural link between inner and outer row dyneins. This Chlamydomonas reinhardtii (Chlamydomonas smithii) protein is Leucine-rich repeat-containing protein ODA7 (ODA7).